Reading from the N-terminus, the 282-residue chain is NADPH-dependent 7-cyano-7-deazaguanine reductase (282 aa).

Substrate is bound at residue 88-90 (IES). 90–91 (SK) serves as a coordination point for NADPH. The Thioimide intermediate role is filled by C190. The active-site Proton donor is D197. 229 to 230 (HE) serves as a coordination point for substrate. An NADPH-binding site is contributed by 258–259 (RG).

Belongs to the GTP cyclohydrolase I family. QueF type 2 subfamily. In terms of assembly, homodimer.

The protein localises to the cytoplasm. The catalysed reaction is 7-aminomethyl-7-carbaguanine + 2 NADP(+) = 7-cyano-7-deazaguanine + 2 NADPH + 3 H(+). It functions in the pathway tRNA modification; tRNA-queuosine biosynthesis. Catalyzes the NADPH-dependent reduction of 7-cyano-7-deazaguanine (preQ0) to 7-aminomethyl-7-deazaguanine (preQ1). This Salmonella paratyphi B (strain ATCC BAA-1250 / SPB7) protein is NADPH-dependent 7-cyano-7-deazaguanine reductase.